Reading from the N-terminus, the 595-residue chain is NADH-quinone oxidoreductase subunit C/D (595 aa).

An NADH dehydrogenase I subunit C region spans residues 1–186 (MAETDIAMPE…TPYMQDKAKQ (186 aa)). The interval 210–595 (DFMFLNLGPN…IDVVMADVDR (386 aa)) is NADH dehydrogenase I subunit D.

The protein in the N-terminal section; belongs to the complex I 30 kDa subunit family. It in the C-terminal section; belongs to the complex I 49 kDa subunit family. In terms of assembly, NDH-1 is composed of 13 different subunits. Subunits NuoB, CD, E, F, and G constitute the peripheral sector of the complex.

It is found in the cell inner membrane. It catalyses the reaction a quinone + NADH + 5 H(+)(in) = a quinol + NAD(+) + 4 H(+)(out). In terms of biological role, NDH-1 shuttles electrons from NADH, via FMN and iron-sulfur (Fe-S) centers, to quinones in the respiratory chain. The immediate electron acceptor for the enzyme in this species is believed to be ubiquinone. Couples the redox reaction to proton translocation (for every two electrons transferred, four hydrogen ions are translocated across the cytoplasmic membrane), and thus conserves the redox energy in a proton gradient. The polypeptide is NADH-quinone oxidoreductase subunit C/D (Acinetobacter baumannii (strain AYE)).